The chain runs to 634 residues: NRPS-independent siderophore synthetase rfs (634 aa).

Its function is as follows. NRPS-independent siderophore synthetase that catalyzes the rhizoferrin biosynthesis from citrate and diaminobutane via an ATP-dependent condensation of citrate with diaminobutane followed by the addition of a second citrate to the monocitryl-diaminobutane intermediate. Can also use as substrates the citrate and diaminobutane homologs oxaloacetic acid, diaminopropane, diaminobutane, diaminopentane, tricarballylic acid, hydroxylamine and ornithine. Forms only a mono-substituted intermediate with oxaloacetic acid and diaminopentane whereas both mono-citryl intermediates and full rhizoferrin derivatives were detected when diaminopropane, and ornithine were used as substrates. Tricarballylic acid only forms a rhizoferrin derivative, but no mono-substituted intermediate. The sequence is that of NRPS-independent siderophore synthetase rfs from Rhizopus delemar (strain RA 99-880 / ATCC MYA-4621 / FGSC 9543 / NRRL 43880) (Mucormycosis agent).